A 242-amino-acid polypeptide reads, in one-letter code: Glucosamine-6-phosphate deaminase (242 aa).

The Proton acceptor; for enolization step role is filled by aspartate 67. Asparagine 136 serves as the catalytic For ring-opening step. Residue histidine 138 is the Proton acceptor; for ring-opening step of the active site. The active-site For ring-opening step is glutamate 143.

The protein belongs to the glucosamine/galactosamine-6-phosphate isomerase family. NagB subfamily.

It carries out the reaction alpha-D-glucosamine 6-phosphate + H2O = beta-D-fructose 6-phosphate + NH4(+). It functions in the pathway amino-sugar metabolism; N-acetylneuraminate degradation; D-fructose 6-phosphate from N-acetylneuraminate: step 5/5. Functionally, catalyzes the reversible isomerization-deamination of glucosamine 6-phosphate (GlcN6P) to form fructose 6-phosphate (Fru6P) and ammonium ion. The chain is Glucosamine-6-phosphate deaminase from Clostridium beijerinckii (strain ATCC 51743 / NCIMB 8052) (Clostridium acetobutylicum).